Consider the following 353-residue polypeptide: Protein RecA (353 aa).

67-74 lines the ATP pocket; that stretch reads GPESSGKT.

This sequence belongs to the RecA family.

It localises to the cytoplasm. Can catalyze the hydrolysis of ATP in the presence of single-stranded DNA, the ATP-dependent uptake of single-stranded DNA by duplex DNA, and the ATP-dependent hybridization of homologous single-stranded DNAs. It interacts with LexA causing its activation and leading to its autocatalytic cleavage. The polypeptide is Protein RecA (Chlamydia pneumoniae (Chlamydophila pneumoniae)).